The following is a 373-amino-acid chain: Chaperone protein DnaJ (373 aa).

A J domain is found at Asp-5–Gly-70. The segment at Gly-134–Val-212 adopts a CR-type zinc-finger fold. Zn(2+) contacts are provided by Cys-147, Cys-150, Cys-164, Cys-167, Cys-186, Cys-189, Cys-200, and Cys-203. CXXCXGXG motif repeat units follow at residues Cys-147–Gly-154, Cys-164–Gly-171, Cys-186–Gly-193, and Cys-200–Gly-207.

It belongs to the DnaJ family. As to quaternary structure, homodimer. The cofactor is Zn(2+).

It localises to the cytoplasm. Its function is as follows. Participates actively in the response to hyperosmotic and heat shock by preventing the aggregation of stress-denatured proteins and by disaggregating proteins, also in an autonomous, DnaK-independent fashion. Unfolded proteins bind initially to DnaJ; upon interaction with the DnaJ-bound protein, DnaK hydrolyzes its bound ATP, resulting in the formation of a stable complex. GrpE releases ADP from DnaK; ATP binding to DnaK triggers the release of the substrate protein, thus completing the reaction cycle. Several rounds of ATP-dependent interactions between DnaJ, DnaK and GrpE are required for fully efficient folding. Also involved, together with DnaK and GrpE, in the DNA replication of plasmids through activation of initiation proteins. This Neisseria gonorrhoeae (strain ATCC 700825 / FA 1090) protein is Chaperone protein DnaJ.